A 122-amino-acid polypeptide reads, in one-letter code: Large ribosomal subunit protein uL14 (122 aa).

Belongs to the universal ribosomal protein uL14 family. In terms of assembly, part of the 50S ribosomal subunit. Forms a cluster with proteins L3 and L19. In the 70S ribosome, L14 and L19 interact and together make contacts with the 16S rRNA in bridges B5 and B8.

Functionally, binds to 23S rRNA. Forms part of two intersubunit bridges in the 70S ribosome. The protein is Large ribosomal subunit protein uL14 of Marinomonas sp. (strain MWYL1).